The following is a 78-amino-acid chain: Large ribosomal subunit protein bL28 (78 aa).

Belongs to the bacterial ribosomal protein bL28 family.

The polypeptide is Large ribosomal subunit protein bL28 (Gloeothece citriformis (strain PCC 7424) (Cyanothece sp. (strain PCC 7424))).